We begin with the raw amino-acid sequence, 225 residues long: uncharacterized protein (225 aa).

Positions 1–48 (MTQLVTRARSARGSTLGEQPRQDQLDFADHTGTAGDGNDGAAAASGPV) are disordered. A compositionally biased stretch (basic and acidic residues) spans 20–29 (PRQDQLDFAD). One can recognise an HTH merR-type domain in the interval 64 to 136 (GYRGPSACQI…LHNIRVAVDH (73 aa)). Residues 201 to 225 (DGGESIAAPEDELASRRKHRDRKIG) form a disordered region. The span at 216–225 (RRKHRDRKIG) shows a compositional bias: basic residues.

This is an uncharacterized protein from Mycobacterium tuberculosis (strain CDC 1551 / Oshkosh).